Here is a 276-residue protein sequence, read N- to C-terminus: MVKGPGLYTDIGKKARDLLYKDYHSDKKFTISTYSPTGVAITSSGTKKGELFLGDVNTQLKNKNITTDIKVDTNSNLFTTITVNEPAPGVKAILSFKVPEQTSGKVELQYLHEYAGISSSVGLKANPIVNFSSVIGTNALAFGADISFDTKLGELTKSNAAVNFVKDDLIGSLTLNEKGDLLSASYYHAINPLSNTAVGVDISHRFSTKENTFTLGTQHALDPLTTVKGRVTNSGKASALIQHEWRPKSLITISSEVDTKAIEKSAKIGLSLALKP.

The protein belongs to the eukaryotic mitochondrial porin (TC 1.B.8.1) family.

The protein resides in the plastid outer membrane. In terms of biological role, forms a channel through the cell membrane that allows diffusion of small hydrophilic molecules. The channel adopts an open conformation at low or zero membrane potential and a closed conformation at potentials above 30-40 mV. The open state has a weak anion selectivity whereas the closed state is cation-selective. The chain is Outer plastidial membrane protein porin (POR1) from Pisum sativum (Garden pea).